A 354-amino-acid polypeptide reads, in one-letter code: Histidinol-phosphate aminotransferase (354 aa).

The residue at position 222 (Lys222) is an N6-(pyridoxal phosphate)lysine.

This sequence belongs to the class-II pyridoxal-phosphate-dependent aminotransferase family. Histidinol-phosphate aminotransferase subfamily. As to quaternary structure, homodimer. Requires pyridoxal 5'-phosphate as cofactor.

It carries out the reaction L-histidinol phosphate + 2-oxoglutarate = 3-(imidazol-4-yl)-2-oxopropyl phosphate + L-glutamate. It functions in the pathway amino-acid biosynthesis; L-histidine biosynthesis; L-histidine from 5-phospho-alpha-D-ribose 1-diphosphate: step 7/9. This Leuconostoc citreum (strain KM20) protein is Histidinol-phosphate aminotransferase.